Consider the following 756-residue polypeptide: MNYRELMQKKNVRPYVLMARFGLEKENQRSTREGLLATTEHPTVFGNRSYHPYIQTDFSETQLELITPVANSGTEMLRFLDAIHDVARRSIPEDEMLWPLSMPPQLPTKDEEIKIAKLDQYDAVLYRRYLAKEYGKRKQMVSGIHFNFEYDQALIQQLYDEQSEVTDCKQFKTKVYMKVARNFLRYRWLITYLFGASPVSEDRYFRVYDDQPQEPVRSIRNSTYGYRNHDNVKVSYASLERYLEDIHRMVENGLLSEEKEFYAPVRLRGGKQMSDLPKTGIRYIELRNLDLNPFSRLGIVEDTVDFLHYFMLYLLWTDEKEEADEWVKTGDIFNEQVALGHPHETIKLIAEGDRIFSEMIDMLDALGIRKGKEVVGKYYQQLRNPQDTVSGKMWTIIQENSNSELGNIFGNQYQSMAFERPYQLAGFREMELSTQIFLFDAIQKGLEIEILDEQEQFLKLQHGEHIEYVKNANMTSKDNYVVPLIMENKTVTKKILSAAGFHVPGGEEFSSFIEAQEAHLRYANKAFVVKPKSTNYGLGITIFKEGASLEDFTEALRIAFKEDTAVLIEEFLPGTEYRFFVLDNDVKAIMLRVPANVTGDGKHTVEELVAAKNSDPLRGTNHRAPLELIQLNDLEKLMLKEQGLTIYSVPEKEQIVYLRENSNVSTGGDSIDMTDVIDDSYKQIAIEAVAALGAKICGIDLIIPDKDVKGTRDSLTYGIIEANFNPAMHMHVYPYAGQGRRLTMDVLKLLYPEVVQ.

A glutamate--cysteine ligase region spans residues 1 to 338 (MNYRELMQKK…TGDIFNEQVA (338 aa)). The ATP-grasp domain occupies 493–751 (KKILSAAGFH…LTMDVLKLLY (259 aa)). 520 to 578 (LRYANKAFVVKPKSTNYGLGITIFKEGASLEDFTEALRIAFKEDTAVLIEEFLPGTEYR) serves as a coordination point for ATP. 3 residues coordinate Mg(2+): aspartate 700, glutamate 721, and asparagine 723. Residues aspartate 700, glutamate 721, and asparagine 723 each coordinate Mn(2+).

It in the N-terminal section; belongs to the glutamate--cysteine ligase type 1 family. Type 2 subfamily. In terms of assembly, monomer. Mg(2+) is required as a cofactor. Requires Mn(2+) as cofactor.

The enzyme catalyses L-cysteine + L-glutamate + ATP = gamma-L-glutamyl-L-cysteine + ADP + phosphate + H(+). It carries out the reaction gamma-L-glutamyl-L-cysteine + glycine + ATP = glutathione + ADP + phosphate + H(+). Its pathway is sulfur metabolism; glutathione biosynthesis; glutathione from L-cysteine and L-glutamate: step 1/2. It participates in sulfur metabolism; glutathione biosynthesis; glutathione from L-cysteine and L-glutamate: step 2/2. Synthesizes glutathione from L-glutamate and L-cysteine via gamma-L-glutamyl-L-cysteine. This is Glutathione biosynthesis bifunctional protein GshAB from Enterococcus faecalis (strain ATCC 700802 / V583).